A 402-amino-acid chain; its full sequence is Zinc finger CCHC domain-containing protein 12 (402 aa).

Positions M1 to P20 are disordered. The CCHC-type zinc finger occupies I346–N363. A disordered region spans residues H383–Q402.

Belongs to the ZCCHC12 family. In terms of assembly, interacts with SMAD1 and CREB-binding protein (CBP). Forms a protein-DNA complex through its association with SMAD1. As to expression, in embryonic brains expression is restricted to the ventral region of the forebrain, including the septum, amygdala, caudal putamen, and in the basal-forebrain cholinergic neurons. In adults, expressed in the brain, and at low levels in the testis.

Transcriptional coactivator in the bone morphogenetic protein (BMP)-signaling pathway. It positively modulates BMP signaling by interacting with SMAD1 and associating with CBP in the transcription complex. It contributes to the BMP-induced enhancement of cholinergic-neuron-specific gene expression. The protein is Zinc finger CCHC domain-containing protein 12 (Zcchc12) of Mus musculus (Mouse).